Here is a 565-residue protein sequence, read N- to C-terminus: Sulfite reductase [NADPH] hemoprotein beta-component (565 aa).

4 residues coordinate [4Fe-4S] cluster: cysteine 429, cysteine 435, cysteine 474, and cysteine 478. Siroheme is bound at residue cysteine 478.

It belongs to the nitrite and sulfite reductase 4Fe-4S domain family. In terms of assembly, alpha(8)-beta(8). The alpha component is a flavoprotein, the beta component is a hemoprotein. It depends on siroheme as a cofactor. [4Fe-4S] cluster serves as cofactor.

The enzyme catalyses hydrogen sulfide + 3 NADP(+) + 3 H2O = sulfite + 3 NADPH + 4 H(+). It participates in sulfur metabolism; hydrogen sulfide biosynthesis; hydrogen sulfide from sulfite (NADPH route): step 1/1. Functionally, component of the sulfite reductase complex that catalyzes the 6-electron reduction of sulfite to sulfide. This is one of several activities required for the biosynthesis of L-cysteine from sulfate. The polypeptide is Sulfite reductase [NADPH] hemoprotein beta-component (Shewanella putrefaciens (strain CN-32 / ATCC BAA-453)).